A 214-amino-acid polypeptide reads, in one-letter code: MIFHIFQIDFIYSFLISFIMLKNLDEITSSIIADPQNKDFTERGIFPLFSAPKTARINIVGQAPGLKAEQSRLYWNDKSGDRLREWLGVDYDYFYNSGIFAVLPMDFYYPGYGKSGDLPPRQGFAERWHPMILGNLPNIQLTILIGQYAQKYYLPENKDNVTNTVKNYRQFLPHFMPLVHPSPRNQLWVTKNPWFEEQVIPELQILVKQIINKD.

Belongs to the uracil-DNA glycosylase (UDG) superfamily.

This is an uncharacterized protein from Haemophilus influenzae (strain ATCC 51907 / DSM 11121 / KW20 / Rd).